The chain runs to 320 residues: Aspartate carbamoyltransferase catalytic subunit (320 aa).

Carbamoyl phosphate is bound by residues Arg-68 and Thr-69. Residue Lys-96 participates in L-aspartate binding. Residues Arg-118, His-148, and Gln-151 each contribute to the carbamoyl phosphate site. Positions 181 and 236 each coordinate L-aspartate. Residues Gly-277 and Pro-278 each coordinate carbamoyl phosphate.

Belongs to the aspartate/ornithine carbamoyltransferase superfamily. ATCase family. In terms of assembly, heterododecamer (2C3:3R2) of six catalytic PyrB chains organized as two trimers (C3), and six regulatory PyrI chains organized as three dimers (R2).

It catalyses the reaction carbamoyl phosphate + L-aspartate = N-carbamoyl-L-aspartate + phosphate + H(+). It participates in pyrimidine metabolism; UMP biosynthesis via de novo pathway; (S)-dihydroorotate from bicarbonate: step 2/3. Its function is as follows. Catalyzes the condensation of carbamoyl phosphate and aspartate to form carbamoyl aspartate and inorganic phosphate, the committed step in the de novo pyrimidine nucleotide biosynthesis pathway. The polypeptide is Aspartate carbamoyltransferase catalytic subunit (Paracidovorax citrulli (strain AAC00-1) (Acidovorax citrulli)).